A 357-amino-acid chain; its full sequence is Phenylalanine--tRNA ligase alpha subunit (357 aa).

E258 contacts Mg(2+).

Belongs to the class-II aminoacyl-tRNA synthetase family. Phe-tRNA synthetase alpha subunit type 1 subfamily. As to quaternary structure, tetramer of two alpha and two beta subunits. The cofactor is Mg(2+).

Its subcellular location is the cytoplasm. It catalyses the reaction tRNA(Phe) + L-phenylalanine + ATP = L-phenylalanyl-tRNA(Phe) + AMP + diphosphate + H(+). This Caulobacter vibrioides (strain ATCC 19089 / CIP 103742 / CB 15) (Caulobacter crescentus) protein is Phenylalanine--tRNA ligase alpha subunit.